The primary structure comprises 346 residues: F(420)H(2) dehydrogenase subunit F (346 aa).

4Fe-4S ferredoxin-type domains follow at residues 5-34 (IAEV…VKKA) and 46-76 (YEKG…ENEL). Residues Cys-14, Cys-17, Cys-20, Cys-24, Cys-55, Cys-58, Cys-61, and Cys-65 each coordinate [4Fe-4S] cluster.

In terms of assembly, the FPO complex is composed of at least 13 different subunits. [4Fe-4S] cluster serves as cofactor. FAD is required as a cofactor.

The protein resides in the membrane. It is found in the cytoplasm. The catalysed reaction is methanophenazine + reduced coenzyme F420-(gamma-L-Glu)(n) = dihydromethanophenazine + oxidized coenzyme F420-(gamma-L-Glu)(n) + H(+). It catalyses the reaction reduced coenzyme F420-(gamma-L-Glu)(n) + 2 oxidized [2Fe-2S]-[ferredoxin] = oxidized coenzyme F420-(gamma-L-Glu)(n) + 2 reduced [2Fe-2S]-[ferredoxin] + 3 H(+). Functionally, component of the F(420)H(2) dehydrogenase (FPO complex) which is part of the energy-conserving F(420)H(2):heterodisulfide oxidoreductase system. The membrane-bound electron transfer system of the complex plays an important role in the metabolism of methylotrophic methanogens when the organisms grow on methanol or methylamines. Catalyzes the oxidation of methanophenazine to dihydromethanophenazine. It shuttles electrons from F(420)H(2), via FAD and iron-sulfur (Fe-S) centers, to methanophenazine (an electron carrier in the membrane). It couples the redox reaction to proton translocation (for every two electrons transferred, two hydrogen ions are translocated across the cytoplasmic membrane), and thus conserves the redox energy in a proton gradient. It also catalyzes the oxidation of F(420)H(2) with quinones such as 2,3-dimethyl-1,4-naphthoquinone, 2-methyl-1,4-naphthoquinone and tetramethyl-p-benzoquinone. Might have a dual function, acting as an electron input module when connected to the membrane integral Fpo complex, or as a soluble single subunit, being involved in the reoxydation of reduced ferredoxin in the cytoplasm. This is F(420)H(2) dehydrogenase subunit F (fpoF) from Methanosarcina mazei (strain ATCC BAA-159 / DSM 3647 / Goe1 / Go1 / JCM 11833 / OCM 88) (Methanosarcina frisia).